An 829-amino-acid polypeptide reads, in one-letter code: Periplasmic nitrate reductase (829 aa).

Residues 1–30 (MKLSRRDFMKANAVAAAAAVAGVSAPTLAA) constitute a signal peptide (tat-type signal). The 57-residue stretch at 41 to 97 (IKWDKAPCRFCGTGCSVLVGSQDGRVVATQGDPDAPVNRGLNCIKGYFLSKIMYGED) folds into the 4Fe-4S Mo/W bis-MGD-type domain. [4Fe-4S] cluster-binding residues include cysteine 48, cysteine 51, cysteine 55, and cysteine 83. Mo-bis(molybdopterin guanine dinucleotide)-binding positions include lysine 85, glutamine 152, asparagine 177, cysteine 181, 214–221 (WGSNMAEM), 245–249 (STFEH), 264–266 (QTD), methionine 374, glutamine 378, asparagine 484, 510–511 (SD), lysine 533, aspartate 560, and 719–728 (TGRVLEHWHT). Phenylalanine 795 is a binding site for substrate. Mo-bis(molybdopterin guanine dinucleotide) is bound by residues asparagine 803 and lysine 820.

It belongs to the prokaryotic molybdopterin-containing oxidoreductase family. NasA/NapA/NarB subfamily. As to quaternary structure, component of the periplasmic nitrate reductase NapAB complex composed of NapA and NapB. It depends on [4Fe-4S] cluster as a cofactor. The cofactor is Mo-bis(molybdopterin guanine dinucleotide). In terms of processing, predicted to be exported by the Tat system. The position of the signal peptide cleavage has not been experimentally proven.

Its subcellular location is the periplasm. The enzyme catalyses 2 Fe(II)-[cytochrome] + nitrate + 2 H(+) = 2 Fe(III)-[cytochrome] + nitrite + H2O. In terms of biological role, catalytic subunit of the periplasmic nitrate reductase complex NapAB. Receives electrons from NapB and catalyzes the reduction of nitrate to nitrite. The protein is Periplasmic nitrate reductase of Aeromonas salmonicida (strain A449).